Here is a 69-residue protein sequence, read N- to C-terminus: Putative membrane protein insertion efficiency factor (69 aa).

It belongs to the UPF0161 family.

It localises to the cell membrane. Functionally, could be involved in insertion of integral membrane proteins into the membrane. The chain is Putative membrane protein insertion efficiency factor from Desulfitobacterium hafniense (strain Y51).